A 308-amino-acid polypeptide reads, in one-letter code: uncharacterized protein (308 aa).

This is an uncharacterized protein from Escherichia coli (strain K12).